The sequence spans 161 residues: Large ribosomal subunit protein uL15 (161 aa).

Residues 1 to 13 are compositionally biased toward basic and acidic residues; sequence MKLNELRDNEGAA. The interval 1-51 is disordered; that stretch reads MKLNELRDNEGAARKKKRVARGPGSGKGKTAGRGIKGQKSRSGVALNGYEG. Gly residues predominate over residues 23–35; sequence PGSGKGKTAGRGI.

Belongs to the universal ribosomal protein uL15 family. As to quaternary structure, part of the 50S ribosomal subunit.

Binds to the 23S rRNA. In Cereibacter sphaeroides (strain ATCC 17023 / DSM 158 / JCM 6121 / CCUG 31486 / LMG 2827 / NBRC 12203 / NCIMB 8253 / ATH 2.4.1.) (Rhodobacter sphaeroides), this protein is Large ribosomal subunit protein uL15.